Consider the following 310-residue polypeptide: Glutaminase (310 aa).

7 residues coordinate substrate: S67, N118, E161, N168, Y192, Y244, and V262.

Belongs to the glutaminase family. As to quaternary structure, homotetramer.

The enzyme catalyses L-glutamine + H2O = L-glutamate + NH4(+). The polypeptide is Glutaminase (Legionella pneumophila (strain Corby)).